We begin with the raw amino-acid sequence, 119 residues long: Large ribosomal subunit protein uL14 (119 aa).

Belongs to the universal ribosomal protein uL14 family. As to quaternary structure, part of the 50S ribosomal subunit. Forms a cluster with proteins L3 and L19. In the 70S ribosome, L14 and L19 interact and together make contacts with the 16S rRNA in bridges B5 and B8.

Its function is as follows. Binds to 23S rRNA. Forms part of two intersubunit bridges in the 70S ribosome. The sequence is that of Large ribosomal subunit protein uL14 from Wolbachia pipientis subsp. Culex pipiens (strain wPip).